Reading from the N-terminus, the 156-residue chain is Small ribosomal subunit protein uS7 (156 aa).

It belongs to the universal ribosomal protein uS7 family. In terms of assembly, part of the 30S ribosomal subunit. Contacts proteins S9 and S11.

One of the primary rRNA binding proteins, it binds directly to 16S rRNA where it nucleates assembly of the head domain of the 30S subunit. Is located at the subunit interface close to the decoding center, probably blocks exit of the E-site tRNA. In Mannheimia succiniciproducens (strain KCTC 0769BP / MBEL55E), this protein is Small ribosomal subunit protein uS7.